The chain runs to 165 residues: Nucleotide-binding protein A9601_05361 (165 aa).

The protein belongs to the YajQ family.

Nucleotide-binding protein. This chain is Nucleotide-binding protein A9601_05361, found in Prochlorococcus marinus (strain AS9601).